We begin with the raw amino-acid sequence, 393 residues long: MRYLTAGESHGPQLTTIIEGLPSLLPITAEKINHDLKRRQGGHGRGRRMQIETDTVEIVAGVRHGQTLGSPVALVVANDDWKHWTKIMGAEPLAEDVNPEDIKRQISRPRPGHADLVGGMKYGHRDLRNVLERSSARETTVRVAVGSVAKALLNELGISIVAHVTEIVGIKADTSLVEGKTVDEIRAIVEADPCYCVDPVASAKMVDAIDEAKKAGDSIGGVVEVIVEGMPAGIGSYVHYDRKLDAKLAAAMLSINAFKGVEFGLGFEMARRKGSEVHDEIIWTEEEGYTRATNRLGGLEGGMSTGMPIVVRGVMKPIPTLYKPLQSVDIETKEPFKASVERSDSCAVPAASVVAEHVIAWEIATVILEQFHSDQLPQLKAQIDEHRQYTKGF.

Residues Arg-39 and Arg-45 each contribute to the NADP(+) site. FMN contacts are provided by residues 133-135, 256-257, Gly-301, 316-320, and Arg-342; these read RSS, NA, and KPIPT.

The protein belongs to the chorismate synthase family. Homotetramer. FMNH2 serves as cofactor.

It catalyses the reaction 5-O-(1-carboxyvinyl)-3-phosphoshikimate = chorismate + phosphate. Its pathway is metabolic intermediate biosynthesis; chorismate biosynthesis; chorismate from D-erythrose 4-phosphate and phosphoenolpyruvate: step 7/7. Catalyzes the anti-1,4-elimination of the C-3 phosphate and the C-6 proR hydrogen from 5-enolpyruvylshikimate-3-phosphate (EPSP) to yield chorismate, which is the branch point compound that serves as the starting substrate for the three terminal pathways of aromatic amino acid biosynthesis. This reaction introduces a second double bond into the aromatic ring system. This Lysinibacillus sphaericus (strain C3-41) protein is Chorismate synthase.